A 446-amino-acid chain; its full sequence is D(1A) dopamine receptor (446 aa).

The Extracellular portion of the chain corresponds to 1–23; it reads MRTLNTSTMEGTGLVAERDFSFR. An N-linked (GlcNAc...) asparagine glycan is attached at N5. A helical membrane pass occupies residues 24-49; it reads ILTACFLSLLILSTLLGNTLVCAAVI. Topologically, residues 50-60 are cytoplasmic; that stretch reads RFRHLRSKVTN. A helical transmembrane segment spans residues 61-87; sequence FFVISLAVSDLLVAVLVMPWKAVAEIA. Residues 88–96 lie on the Extracellular side of the membrane; that stretch reads GFWPFGSFC. The cysteines at positions 96 and 186 are disulfide-linked. The helical transmembrane segment at 97–119 threads the bilayer; that stretch reads NIWVAFDIMCSTASILNLCVISV. Topologically, residues 120 to 138 are cytoplasmic; it reads DRYWAISSPFRYERKMTPK. The helical transmembrane segment at 139–163 threads the bilayer; that stretch reads AAFILISVAWTLSVLISFIPVQLSW. Over 164-192 the chain is Extracellular; sequence HKAKPTGPSEGNATSLGKTINNCDSSLSR. A glycan (N-linked (GlcNAc...) asparagine) is linked at N175. Residues 193 to 218 form a helical membrane-spanning segment; sequence TYAISSSLISFYIPVAIMIVTYTRIY. Residues 219 to 272 are Cytoplasmic-facing; sequence RIAQKQIRRISALERAAVHAKNCQTTTGNGNPMECSQPESSFKMSFKRETKVLK. Residues 273–299 traverse the membrane as a helical segment; the sequence is TLSVIMGVFVCCWLPFFILNCMVPFCG. Topologically, residues 300-312 are extracellular; that stretch reads SGETKPFCIDSIT. Residues 313 to 337 traverse the membrane as a helical segment; it reads FDVFVWFGWANSSLNPIIYAFNADF. The Cytoplasmic segment spans residues 338-446; sequence RKAFSTLLGC…PITQNGQHPT (109 aa). Residues C347 and C351 are each lipidated (S-palmitoyl cysteine).

It belongs to the G-protein coupled receptor 1 family. As to quaternary structure, interacts with DNAJC14 via its C-terminus. Interacts with DRD2. Interacts with DORIP1.

The protein resides in the cell membrane. It is found in the endoplasmic reticulum membrane. The protein localises to the cell projection. Its subcellular location is the cilium membrane. It localises to the dendrite. The protein resides in the dendritic spine. Dopamine receptor whose activity is mediated by G proteins which activate adenylyl cyclase. This chain is D(1A) dopamine receptor (DRD1), found in Bos taurus (Bovine).